The sequence spans 296 residues: Putative peptide transport system permease protein BRA1093/BS1330_II1085 (296 aa).

A run of 6 helical transmembrane segments spans residues 35–55 (IGLV…WITN), 97–117 (LWIG…IGIA), 131–151 (VMDA…SAAL), 205–225 (ILPN…AYAI), 229–249 (ATLS…GSIV), and 260–280 (WWIM…INLI). Positions 97-281 (LWIGLTVAVL…ISALAINLIG (185 aa)) constitute an ABC transmembrane type-1 domain.

This sequence belongs to the binding-protein-dependent transport system permease family. The complex is composed of two ATP-binding proteins (BRA1094), two transmembrane proteins (BRA1092 and BRA1093) and a solute-binding protein (BRA1090).

The protein resides in the cell inner membrane. Functionally, probably part of an ABC transporter complex that could be involved in peptide import. Probably responsible for the translocation of the substrate across the membrane. This is Putative peptide transport system permease protein BRA1093/BS1330_II1085 from Brucella suis biovar 1 (strain 1330).